Here is a 213-residue protein sequence, read N- to C-terminus: High frequency lysogenization protein HflD homolog (213 aa).

The stretch at 79–126 (QGLNAELTRYTLSLMVLERKLSSAKGALDTLGNRINGLQRQLEHFDLQ) forms a coiled coil.

The protein belongs to the HflD family.

The protein resides in the cytoplasm. The protein localises to the cell inner membrane. The polypeptide is High frequency lysogenization protein HflD homolog (Shigella flexneri serotype 5b (strain 8401)).